Here is a 323-residue protein sequence, read N- to C-terminus: DNA-directed RNA polymerase subunit alpha 1 (323 aa).

An alpha N-terminal domain (alpha-NTD) region spans residues 1–228 (MSNNNSKQEF…EQISVFVSLR (228 aa)). Positions 244–323 (IDPILLKPID…DNFRELVEGK (80 aa)) are alpha C-terminal domain (alpha-CTD).

The protein belongs to the RNA polymerase alpha chain family. Homodimer. The RNAP catalytic core consists of 2 alpha, 1 beta, 1 beta' and 1 omega subunit. When a sigma factor is associated with the core the holoenzyme is formed, which can initiate transcription.

It catalyses the reaction RNA(n) + a ribonucleoside 5'-triphosphate = RNA(n+1) + diphosphate. Its function is as follows. DNA-dependent RNA polymerase catalyzes the transcription of DNA into RNA using the four ribonucleoside triphosphates as substrates. The sequence is that of DNA-directed RNA polymerase subunit alpha 1 from Francisella tularensis subsp. novicida (strain U112).